Consider the following 524-residue polypeptide: MNILLLIFYFLVCFLIFDFIKKNKVKKYDVPTLSYALPIIGHLYKLGVNPHRNLTKLVEKNGGIFSLWLGDIKTVIVTDPSINKEIMVKQFTNFSDRPRLKSFESFTGGGVNLIFIDYNEKWPVIRKIVSSSITKTKIISNYKEVIENQTKILINSMRTHSKINEPFKSKKYFGKFSISIVLGIMFKQDNDEKQININDNNIDNDPITKLTEPIQQVFLLLGTGNISDFIKILRPFFKNEYKKLNNSASKVFKFMEEIYDQHLLKFDKSNPRDLMDYFIEYEFTNSPNTTLEEKKISIIKGCMSFVFAGDDTVAATLEWVCLYLINNPAIQEKCYNELISVLGDNNNESKIKFISLKERDNCQYLINVIKEVLRIRTPLPLSVPRIATQNCEINGFFIEKGTQILSNAFGMSHLYVDEPNVFNPDRWINYYNQKQQQQQQQQQPQPIQNNNYFNDLDRVCLPFSTGPRNCVGISIAELNLFSVCANIILNFQIKSIDGMQLKDIEVSGISIHPIPFSIKLISRN.

The helical transmembrane segment at 1–21 (MNILLLIFYFLVCFLIFDFIK) threads the bilayer. Residue Cys470 participates in heme binding.

The protein belongs to the cytochrome P450 family. Heme is required as a cofactor.

It is found in the membrane. The polypeptide is Probable cytochrome P450 519C1 (cyp519C1) (Dictyostelium discoideum (Social amoeba)).